Here is a 434-residue protein sequence, read N- to C-terminus: V-type ATP synthase beta chain (434 aa).

The protein belongs to the ATPase alpha/beta chains family.

In terms of biological role, produces ATP from ADP in the presence of a proton gradient across the membrane. The V-type beta chain is a regulatory subunit. This chain is V-type ATP synthase beta chain, found in Borreliella afzelii (strain PKo) (Borrelia afzelii).